A 479-amino-acid polypeptide reads, in one-letter code: Ribulose bisphosphate carboxylase large chain 2 (479 aa).

Substrate-binding residues include N116 and T166. The active-site Proton acceptor is K168. K170 serves as a coordination point for substrate. Mg(2+) contacts are provided by K194, D196, and E197. K194 carries the post-translational modification N6-carboxylysine. H287 (proton acceptor) is an active-site residue. Substrate is bound by residues R288, H320, and S372.

Belongs to the RuBisCO large chain family. Type I subfamily. As to quaternary structure, heterohexadecamer of 8 large chains and 8 small chains. The cofactor is Mg(2+).

It carries out the reaction 2 (2R)-3-phosphoglycerate + 2 H(+) = D-ribulose 1,5-bisphosphate + CO2 + H2O. The catalysed reaction is D-ribulose 1,5-bisphosphate + O2 = 2-phosphoglycolate + (2R)-3-phosphoglycerate + 2 H(+). In terms of biological role, ruBisCO catalyzes two reactions: the carboxylation of D-ribulose 1,5-bisphosphate, the primary event in carbon dioxide fixation, as well as the oxidative fragmentation of the pentose substrate. Both reactions occur simultaneously and in competition at the same active site. The sequence is that of Ribulose bisphosphate carboxylase large chain 2 from Bradyrhizobium sp. (strain BTAi1 / ATCC BAA-1182).